The primary structure comprises 151 residues: 6,7-dimethyl-8-ribityllumazine synthase (151 aa).

5-amino-6-(D-ribitylamino)uracil-binding positions include phenylalanine 15, 47-49, and 71-73; these read TFE and AVI. A (2S)-2-hydroxy-3-oxobutyl phosphate-binding site is contributed by 76-77; the sequence is ET. Catalysis depends on histidine 79, which acts as the Proton donor. Residue leucine 104 coordinates 5-amino-6-(D-ribitylamino)uracil. Position 119 (arginine 119) interacts with (2S)-2-hydroxy-3-oxobutyl phosphate.

It belongs to the DMRL synthase family.

It carries out the reaction (2S)-2-hydroxy-3-oxobutyl phosphate + 5-amino-6-(D-ribitylamino)uracil = 6,7-dimethyl-8-(1-D-ribityl)lumazine + phosphate + 2 H2O + H(+). It functions in the pathway cofactor biosynthesis; riboflavin biosynthesis; riboflavin from 2-hydroxy-3-oxobutyl phosphate and 5-amino-6-(D-ribitylamino)uracil: step 1/2. Its function is as follows. Catalyzes the formation of 6,7-dimethyl-8-ribityllumazine by condensation of 5-amino-6-(D-ribitylamino)uracil with 3,4-dihydroxy-2-butanone 4-phosphate. This is the penultimate step in the biosynthesis of riboflavin. The chain is 6,7-dimethyl-8-ribityllumazine synthase from Metallosphaera sedula (strain ATCC 51363 / DSM 5348 / JCM 9185 / NBRC 15509 / TH2).